The primary structure comprises 1140 residues: Rho GTPase-activating protein gacF (1140 aa).

Disordered regions lie at residues 1–145, 189–236, 455–504, 520–644, 661–700, 720–759, 773–927, and 952–1095; these read MKTH…KPSR, ESDI…IEPI, INNN…STSF, EVQQ…GLES, ESSK…DEDE, ETND…NNIS, AKVT…STLS, and TSSP…NHTN. Low complexity-rich tracts occupy residues 10 to 26 and 35 to 71; these read LGGL…LKSF and QQQQ…ASSS. A coiled-coil region spans residues 28-55; sequence TEEVIHEQQQQQQQHNNNNNNNNNHQRQ. Positions 72–82 are enriched in polar residues; sequence IEETSGYLSKT. Low complexity-rich tracts occupy residues 83-136 and 193-222; these read SSSS…TSSP and DNGS…SSSS. The Rho-GAP domain occupies 234–409; the sequence is EPISQSTEDY…RLIENYHSIF (176 aa). Low complexity-rich tracts occupy residues 456–475 and 482–493; these read NNNS…SPYK and PKSSPKLNNRNS. Residues 494–504 show a composition bias toward polar residues; sequence ISPKLSSSTSF. Residues 517–548 are a coiled coil; it reads ISDEVQQEQQNQQQQQDEQQDEQQDEQQDEQQ. Positions 520–533 are enriched in low complexity; the sequence is EVQQEQQNQQQQQD. A compositionally biased stretch (acidic residues) spans 534-549; that stretch reads EQQDEQQDEQQDEQQD. The span at 550 to 566 shows a compositional bias: low complexity; that stretch reads EQNSNSTSINTSSSSIT. Residues 572-596 are compositionally biased toward polar residues; it reads STVQYLNRINTCRRPSSWTNNNRIK. The span at 597–606 shows a compositional bias: basic residues; it reads QQQHHHHHHQ. A compositionally biased stretch (low complexity) spans 607–631; it reads QQQQHQQHQQQQSSSSESNSSLTSS. 2 stretches are compositionally biased toward polar residues: residues 632 to 641 and 672 to 684; these read PQKRLNSVNG and NRQM…NNIG. Over residues 724–759 the composition is skewed to low complexity; the sequence is DNNNNDQINNSNSSNNIPKTTITTTTNNTTTTNNIS. The span at 773 to 796 shows a compositional bias: polar residues; sequence AKVTPTPTPAPMQTSSFLSTKQTN. The segment covering 797–822 has biased composition (low complexity); the sequence is SPSSSSSPSSTVSSTSSSPSSSLSSS. Polar residues predominate over residues 823–854; it reads IDNKTMSNVNYNRFQPANRTVSSPNVRNFSVP. Low complexity-rich tracts occupy residues 891 to 914, 952 to 1058, and 1065 to 1079; these read KPKN…NSTP, TSSP…TSST, and HSNS…SSSS.

It is found in the cytoplasm. Its function is as follows. Rho GTPase-activating protein involved in the signal transduction pathway. The chain is Rho GTPase-activating protein gacF (gacF) from Dictyostelium discoideum (Social amoeba).